The sequence spans 260 residues: Ribonuclease HII (260 aa).

In terms of domain architecture, RNase H type-2 spans 75-260 (ELIAGVDEVG…FEPIKSIIKK (186 aa)). Positions 81, 82, and 173 each coordinate a divalent metal cation.

This sequence belongs to the RNase HII family. Requires Mn(2+) as cofactor. The cofactor is Mg(2+).

It localises to the cytoplasm. The catalysed reaction is Endonucleolytic cleavage to 5'-phosphomonoester.. Endonuclease that specifically degrades the RNA of RNA-DNA hybrids. The sequence is that of Ribonuclease HII from Streptococcus thermophilus (strain CNRZ 1066).